The primary structure comprises 129 residues: Cuticle protein 12.5 (129 aa).

Repeat copies occupy residues 7-10 (AAPA), 15-18 (AAPA), 23-26 (AAPA), 28-31 (AAPV), 37-40 (AAPA), 67-70 (AAPA), 79-82 (AAPA), 91-94 (AAPA), 103-106 (AAPA), and 117-120 (AAPA).

In terms of biological role, component of the cuticle of migratory locust which contains more than 100 different structural proteins. In Locusta migratoria (Migratory locust), this protein is Cuticle protein 12.5.